Reading from the N-terminus, the 417-residue chain is XO lethal protein 1 (417 aa).

A disordered region spans residues 373–417 (VSPGETSSEGISDEHHYEEYDEDDIMEEEEAPSARQDDTYDEDEE). Residues 391-403 (EYDEDDIMEEEEA) show a composition bias toward acidic residues.

This sequence belongs to the GHMP kinase family. Xol-1 subfamily.

Its subcellular location is the nucleus. Its function is as follows. Sex-determining factor that is required for sexual differentiation and X chromosome dosage compensation to promote male development. High expression during gastrulation triggers male development, while low expression at that time triggers hermaphrodite development. Although related to GHMP kinase, its mode of action remains unclear. The sequence is that of XO lethal protein 1 from Caenorhabditis elegans.